Reading from the N-terminus, the 232-residue chain is Octanoyltransferase (232 aa).

The 189-residue stretch at 43–231 (LPTSNYLLFV…HLTHLFEAEI (189 aa)) folds into the BPL/LPL catalytic domain. Substrate is bound by residues 88-95 (RGGDITYH), 160-162 (AMG), and 173-175 (GFA). Cys191 (acyl-thioester intermediate) is an active-site residue.

Belongs to the LipB family.

It localises to the cytoplasm. The enzyme catalyses octanoyl-[ACP] + L-lysyl-[protein] = N(6)-octanoyl-L-lysyl-[protein] + holo-[ACP] + H(+). Its pathway is protein modification; protein lipoylation via endogenous pathway; protein N(6)-(lipoyl)lysine from octanoyl-[acyl-carrier-protein]: step 1/2. In terms of biological role, catalyzes the transfer of endogenously produced octanoic acid from octanoyl-acyl-carrier-protein onto the lipoyl domains of lipoate-dependent enzymes. Lipoyl-ACP can also act as a substrate although octanoyl-ACP is likely to be the physiological substrate. This is Octanoyltransferase from Flavobacterium johnsoniae (strain ATCC 17061 / DSM 2064 / JCM 8514 / BCRC 14874 / CCUG 350202 / NBRC 14942 / NCIMB 11054 / UW101) (Cytophaga johnsonae).